A 91-amino-acid chain; its full sequence is UPF0250 protein PSPTO_4820 (91 aa).

It belongs to the UPF0250 family.

This chain is UPF0250 protein PSPTO_4820, found in Pseudomonas syringae pv. tomato (strain ATCC BAA-871 / DC3000).